A 323-amino-acid chain; its full sequence is Isoeugenol synthase 1 (323 aa).

Residues 14–17 (TGYL), 36–47 (VMPLKKNSDDSK), 88–90 (VPQ), 113–115 (SEF), Lys-135, and 155–157 (NSL) contribute to the NADP(+) site. The active-site Proton donor/acceptor is Lys-135.

This sequence belongs to the NmrA-type oxidoreductase family. As to expression, expressed in flowers, especially in corolla and tubes of petals, probably in both epidermal and mesophyll cell layers.

The enzyme catalyses (E)-isoeugenol + acetate + NADP(+) = (E)-coniferyl acetate + NADPH. Its pathway is aromatic compound metabolism; phenylpropanoid biosynthesis. Inhibited by zinc and copper ions. Repressed by 4-bromo-cinnamyl acetate. Its function is as follows. Involved in the biosynthesis of the floral volatile isoeugenol. Catalyzes the synthesis of the phenylpropene isoeugenol from coniferyl acetate. Phenylpropenes are the primary constituents of various essential plant oils. They are produced as antimicrobial and antianimal compounds, or as floral attractants of pollinators. Isoeugenol is a characteristic aromatic constituent of spices and a floral volatile compound. The polypeptide is Isoeugenol synthase 1 (Petunia hybrida (Petunia)).